We begin with the raw amino-acid sequence, 331 residues long: MNISILGAGAWGTALAMSLAERHAVMLWGRDAAVMQAAQQARENAVYLPGFRFPDKLLLSSELGAAITHAGSDGLLIVATSLAGLRPLAMQLKPYAIPNLVWLCKGFEEQTNLLPHQIVHEILGDAIPAGALSGPSFAQEVARGLPCALAIASDSEALRERVVHAVHGPAIRIYSTDDLIGVEVGGAVKNILAIATGIIDGLGLGLNARAALITRGLSEITRLGVALGGRAETFNGLAGMGDLILTCTGDLSRNRKVGLGLAQGKKLEQIVVELGHVAEGVRCAQAVRQLANQHGVDMPITNAVAAVLFDGESPRDTVKRLLSRESRDEIA.

The NADPH site is built by Trp-11, Arg-30, and Lys-105. Sn-glycerol 3-phosphate contacts are provided by Lys-105, Gly-134, and Ser-136. Ala-138 serves as a coordination point for NADPH. The sn-glycerol 3-phosphate site is built by Lys-189, Asp-242, Ser-252, Arg-253, and Asn-254. Residue Lys-189 is the Proton acceptor of the active site. Arg-253 contacts NADPH. Positions 277 and 279 each coordinate NADPH.

It belongs to the NAD-dependent glycerol-3-phosphate dehydrogenase family.

It localises to the cytoplasm. It carries out the reaction sn-glycerol 3-phosphate + NAD(+) = dihydroxyacetone phosphate + NADH + H(+). It catalyses the reaction sn-glycerol 3-phosphate + NADP(+) = dihydroxyacetone phosphate + NADPH + H(+). It functions in the pathway membrane lipid metabolism; glycerophospholipid metabolism. Functionally, catalyzes the reduction of the glycolytic intermediate dihydroxyacetone phosphate (DHAP) to sn-glycerol 3-phosphate (G3P), the key precursor for phospholipid synthesis. The chain is Glycerol-3-phosphate dehydrogenase [NAD(P)+] from Janthinobacterium sp. (strain Marseille) (Minibacterium massiliensis).